Consider the following 415-residue polypeptide: MEVNFVTNRIEIAPTTRHEGHAKLILEVDEEGIVNKAYYLNTTPVRGFETMLKGKPAEFAPIAVMRICGICQTTHGIASCEAIENAIDCEVPDDGLLLRELVGIGNRLHSHPLHHLLTIDDFLKPDETDLKIELIKLIQRMRKVGQLVVDIVGGEGIHPPNIVIGGMRTNITERAKSRLYYALRQYEKDAYELYEKYTELIERYLEEIGIPDLGAHEYPYIATHTTYGDRYAINWDDVTEIPAQRYYDDEEAKQTTTIQIPLYAGVPAEGGPRARMVKFGNFREGGSAMDINIARAQENLGAVYRALEILDELDLNGKTRAEVEYKDGFGIGVHEAPRATNTHMAEVGKDGKIKSYRIIAASTWNFPIVEKAIEGYPQQYAEVIMRAYDICASCATHVIVKDEETKEIIEVRKML.

4 residues coordinate Ni(2+): C68, C71, C391, and C394.

Belongs to the [NiFe]/[NiFeSe] hydrogenase large subunit family. As to quaternary structure, heterocomplex of the form (alpha(1)beta(1)gamma(1))(8). Ni(2+) is required as a cofactor. Iron-sulfur cluster serves as cofactor. Requires FAD as cofactor.

The enzyme catalyses oxidized coenzyme F420-(gamma-L-Glu)(n) + H2 + H(+) = reduced coenzyme F420-(gamma-L-Glu)(n). In terms of biological role, reduces the physiological low-potential two-electron acceptor coenzyme F420, and the artificial one-electron acceptor methylviologen. This chain is Coenzyme F420 hydrogenase subunit alpha (frhA), found in Methanocaldococcus jannaschii (strain ATCC 43067 / DSM 2661 / JAL-1 / JCM 10045 / NBRC 100440) (Methanococcus jannaschii).